A 216-amino-acid chain; its full sequence is Squamosa promoter-binding-like protein 13 (216 aa).

Positions 32–110 (GDGGAALPSP…PSGGGGGPRC (79 aa)) are disordered. The segment covering 67 to 91 (SSSAAVAAGASSSSSSSSVAAAARR) has biased composition (low complexity). The segment covering 94–108 (GRAGGGAPSGGGGGP) has biased composition (gly residues). The segment at 107-184 (GPRCQVERCG…AGHNERRRKS (78 aa)) adopts an SBP-type zinc-finger fold. Residues Cys-110, Cys-115, Cys-132, His-135, Cys-151, Cys-154, His-158, and Cys-170 each contribute to the Zn(2+) site. The short motif at 167 to 183 (KRSCRRRLAGHNERRRK) is the Bipartite nuclear localization signal element. Positions 175–216 (AGHNERRRKSAADTAHGENCRHADQDAGRSHQGTGNPPFQIR) are disordered. The span at 189–203 (AHGENCRHADQDAGR) shows a compositional bias: basic and acidic residues. Over residues 205-216 (HQGTGNPPFQIR) the composition is skewed to polar residues.

Ubiquitous.

Its subcellular location is the nucleus. Its function is as follows. Trans-acting factor that binds specifically to the consensus nucleotide sequence 5'-TNCGTACAA-3'. May be involved in panicle development. This is Squamosa promoter-binding-like protein 13 (SPL13) from Oryza sativa subsp. japonica (Rice).